We begin with the raw amino-acid sequence, 411 residues long: Dual-specificity RNA methyltransferase RlmN (411 aa).

The active-site Proton acceptor is the Glu124. The 250-residue stretch at 130 to 379 folds into the Radical SAM core domain; the sequence is EEGRGTLCIS…IRTPRGRDIL (250 aa). A disulfide bond links Cys137 and Cys382. The [4Fe-4S] cluster site is built by Cys144, Cys148, and Cys151. S-adenosyl-L-methionine contacts are provided by residues 208–209, Ser240, 262–264, and Asn339; these read GE and SLH. Catalysis depends on Cys382, which acts as the S-methylcysteine intermediate.

Belongs to the radical SAM superfamily. RlmN family. It depends on [4Fe-4S] cluster as a cofactor.

It localises to the cytoplasm. It carries out the reaction adenosine(2503) in 23S rRNA + 2 reduced [2Fe-2S]-[ferredoxin] + 2 S-adenosyl-L-methionine = 2-methyladenosine(2503) in 23S rRNA + 5'-deoxyadenosine + L-methionine + 2 oxidized [2Fe-2S]-[ferredoxin] + S-adenosyl-L-homocysteine. It catalyses the reaction adenosine(37) in tRNA + 2 reduced [2Fe-2S]-[ferredoxin] + 2 S-adenosyl-L-methionine = 2-methyladenosine(37) in tRNA + 5'-deoxyadenosine + L-methionine + 2 oxidized [2Fe-2S]-[ferredoxin] + S-adenosyl-L-homocysteine. Specifically methylates position 2 of adenine 2503 in 23S rRNA and position 2 of adenine 37 in tRNAs. m2A2503 modification seems to play a crucial role in the proofreading step occurring at the peptidyl transferase center and thus would serve to optimize ribosomal fidelity. In Sinorhizobium fredii (strain NBRC 101917 / NGR234), this protein is Dual-specificity RNA methyltransferase RlmN.